Reading from the N-terminus, the 100-residue chain is Urease subunit gamma (100 aa).

This sequence belongs to the urease gamma subunit family. In terms of assembly, heterotrimer of UreA (gamma), UreB (beta) and UreC (alpha) subunits. Three heterotrimers associate to form the active enzyme.

The protein localises to the cytoplasm. The catalysed reaction is urea + 2 H2O + H(+) = hydrogencarbonate + 2 NH4(+). Its pathway is nitrogen metabolism; urea degradation; CO(2) and NH(3) from urea (urease route): step 1/1. This Ralstonia nicotianae (strain ATCC BAA-1114 / GMI1000) (Ralstonia solanacearum) protein is Urease subunit gamma.